Here is a 568-residue protein sequence, read N- to C-terminus: Involucrin (568 aa).

Disordered stretches follow at residues 23-499 (CSPA…EKEL) and 517-568 (RKKH…HEVQ). Low complexity predominate over residues 25 to 36 (PAQTQQEQTKQP). A compositionally biased stretch (basic and acidic residues) spans 49–77 (TQEKGFPKHEEKEANPVKDLPEQESEHHQ). Residues 78–88 (QPGPQKQQLQV) show a composition bias toward low complexity. Residues 89–106 (KKPEQELQEQELHSEKQP) show a composition bias toward basic and acidic residues. Composition is skewed to low complexity over residues 107–121 (QEPQ…QQQR), 133–154 (HQQP…QDVL), and 172–181 (PELPLGQQQK). Basic and acidic residues predominate over residues 193–213 (KQQKLHLVERHQEPQEQELHH). A compositionally biased stretch (low complexity) spans 217–232 (QKQQQPQEQELQLVQH). Composition is skewed to basic and acidic residues over residues 266 to 333 (ESHE…HQET) and 345 to 456 (KPHE…HLGK). Residues 457–467 (QQEQQIEYEGY) show a composition bias toward low complexity. Serine 472 is subject to Phosphoserine. Basic and acidic residues-rich tracts occupy residues 478–499 (KQEK…EKEL), 517–532 (RKKH…EKQI), and 551–568 (VKED…HEVQ).

Belongs to the involucrin family. In terms of assembly, directly or indirectly cross-linked to cornifelin (CNFN). In terms of processing, substrate of transglutaminase. Specific glutamines or lysines are cross-linked to keratins, desmoplakin and to inter involucrin molecules. Keratinocytes of epidermis and other stratified squamous epithelia.

It is found in the cytoplasm. Its function is as follows. Part of the insoluble cornified cell envelope (CE) of stratified squamous epithelia. The chain is Involucrin (Ivl) from Rattus norvegicus (Rat).